Consider the following 357-residue polypeptide: Leucoanthocyanidin dioxygenase (357 aa).

In terms of domain architecture, Fe2OG dioxygenase spans 212–311; sequence LLLQMKINYY…RISWAVFCEP (100 aa). 3 residues coordinate Fe cation: H236, D238, and H292.

Belongs to the iron/ascorbate-dependent oxidoreductase family. Requires Fe cation as cofactor. L-ascorbate serves as cofactor.

The enzyme catalyses a (2R,3S,4S)-leucoanthocyanidin + 2-oxoglutarate + O2 = a 4-H-anthocyanidin with a 3-hydroxy group + succinate + CO2 + 2 H2O. It functions in the pathway pigment biosynthesis; anthocyanin biosynthesis. Functionally, oxidation of leucoanthocyanidins into anthocyanidins. In Malus domestica (Apple), this protein is Leucoanthocyanidin dioxygenase (ANS).